A 206-amino-acid chain; its full sequence is CMP-5'-(N-acetyl-N-hydroxy-3-aminopropyl)phosphonate hydrolase (206 aa).

In terms of domain architecture, Nudix hydrolase spans 37–166; that stretch reads VRAPGAAIIV…RTVTSGTAIG (130 aa). The Nudix box motif lies at 74–95; that stretch reads GLVDDREDPAVTAAREAEEETG. Over residues 177 to 194 the composition is skewed to low complexity; it reads RQQPGGVQEQPGGAQQQG. The tract at residues 177–206 is disordered; the sequence is RQQPGGVQEQPGGAQQQGMNESHSGRTVRG.

The protein belongs to the Nudix hydrolase family. The cofactor is Mg(2+).

It catalyses the reaction CMP-5'-(N-acetyl-N-hydroxy-3-aminopropyl)phosphonate + H2O = 3-(N-acetyl-N-hydroxy)aminopropylphosphonate + CMP + H(+). It functions in the pathway antibiotic biosynthesis. In terms of biological role, nucleotide hydrolase involved in the biosynthesis of the phosphonate antibiotic FR-900098, a potent antimalarial agent that acts as an inhibitor of 1-deoxy-D-xylulose 5-phosphate reductoisomerase (DXR), the first enzyme in the nonmevalonate pathway for isoprenoid biosynthesis. Catalyzes the hydrolysis of CMP-5'-(N-acetyl-N-hydroxy-3-aminopropyl)phosphonate (CMP-5'-FR-900098) to produce CMP and the final compound FR-900098. In vitro, has broad substrate specificity and also catalyzes the hydrolysis of all the other CMP-containing intermediates within the pathway and shows low activity toward CTP. The sequence is that of CMP-5'-(N-acetyl-N-hydroxy-3-aminopropyl)phosphonate hydrolase from Streptomyces rubellomurinus (strain ATCC 31215).